The sequence spans 229 residues: Phosphoglycolate phosphatase (229 aa).

Residue D13 is the Nucleophile of the active site. 3 residues coordinate Mg(2+): D13, D15, and D178.

The protein belongs to the HAD-like hydrolase superfamily. CbbY/CbbZ/Gph/YieH family. Mg(2+) is required as a cofactor.

The catalysed reaction is 2-phosphoglycolate + H2O = glycolate + phosphate. The protein operates within organic acid metabolism; glycolate biosynthesis; glycolate from 2-phosphoglycolate: step 1/1. Functionally, specifically catalyzes the dephosphorylation of 2-phosphoglycolate. Is involved in the dissimilation of the intracellular 2-phosphoglycolate formed during the DNA repair of 3'-phosphoglycolate ends, a major class of DNA lesions induced by oxidative stress. In Photobacterium profundum (strain SS9), this protein is Phosphoglycolate phosphatase.